Consider the following 245-residue polypeptide: Polynucleotide 3'-phosphatase (245 aa).

The protein belongs to the DNA 3' phosphatase family.

It is found in the nucleus. It carries out the reaction a 3'end (2'-deoxyribonucleotide 3'-phosphate)-DNA + H2O = a 3'-end 2'-deoxyribonucleotide-DNA + phosphate. Dephosphorylate DNA's 3'-phosphate termini. Has a role in the repair of breaks in single-stranded DNA. In Saccharomyces mikatae (Yeast), this protein is Polynucleotide 3'-phosphatase (TPP1).